The chain runs to 259 residues: MWFPILTWLVATAVALDCSAKDLDSYNFALLQGTHAVESVKDTPPSTTKTTWYFGICESVSSKKAPACPKNVDICGVTEVKVDKDYIVTQVVGFNSNLEKKYTPVESKNENGIKISYKGANWGSSLVNAEVYYICAEDKDGDDTFTVESWDDEMLFAQVKSKAACVTSKDDKKKPKKPEDNGESWGWFTWIFIFMVLFLSIYIIGGAWFQYNKGNAIDFQSALREVLENFVDLVRGLPSFIREIIEKVTGSNRGEYSAV.

The N-terminal stretch at 1 to 15 is a signal peptide; that stretch reads MWFPILTWLVATAVA. Residues 16–167 form the MRH domain; the sequence is LDCSAKDLDS…QVKSKAACVT (152 aa). Residues 16–184 are Lumenal-facing; that stretch reads LDCSAKDLDS…PKKPEDNGES (169 aa). Intrachain disulfides connect Cys-18-Cys-57, Cys-68-Cys-75, and Cys-135-Cys-165. A helical membrane pass occupies residues 185–205; it reads WGWFTWIFIFMVLFLSIYIIG. Residues 206-259 are Cytoplasmic-facing; it reads GAWFQYNKGNAIDFQSALREVLENFVDLVRGLPSFIREIIEKVTGSNRGEYSAV.

It belongs to the ATG27 family.

It is found in the cytoplasmic vesicle membrane. The protein resides in the golgi apparatus membrane. Its subcellular location is the mitochondrion membrane. The protein localises to the preautophagosomal structure membrane. Effector of VPS34 phosphatidylinositol 3-phosphate kinase signaling. Regulates the cytoplasm to vacuole transport (Cvt) vesicle formation. Plays a role in ATG protein retrieval from the pre-autophagosomal structure (PAS) and is especially required for autophagy-dependent cycling of ATG9. The chain is Autophagy-related protein 27 (ATG27) from Meyerozyma guilliermondii (strain ATCC 6260 / CBS 566 / DSM 6381 / JCM 1539 / NBRC 10279 / NRRL Y-324) (Yeast).